A 1390-amino-acid chain; its full sequence is DNA-directed RNA polymerase subunit beta (1390 aa).

It belongs to the RNA polymerase beta chain family. In terms of assembly, the RNAP catalytic core consists of 2 alpha, 1 beta, 1 beta' and 1 omega subunit. When a sigma factor is associated with the core the holoenzyme is formed, which can initiate transcription.

The catalysed reaction is RNA(n) + a ribonucleoside 5'-triphosphate = RNA(n+1) + diphosphate. Functionally, DNA-dependent RNA polymerase catalyzes the transcription of DNA into RNA using the four ribonucleoside triphosphates as substrates. The protein is DNA-directed RNA polymerase subunit beta of Mycoplasma genitalium (strain ATCC 33530 / DSM 19775 / NCTC 10195 / G37) (Mycoplasmoides genitalium).